The following is a 119-amino-acid chain: Immunoglobulin heavy variable 2-70 (119 aa).

An N-terminal signal peptide occupies residues 1-19 (MDILCSTLLLLTVPSWVLS). Position 20 is a pyrrolidone carboxylic acid (Gln-20). The tract at residues 20–44 (QVTLRESGPALVKPTQTLTLTCTFS) is framework-1. An Ig-like domain is found at 20 to 119 (QVTLRESGPA…DTATYYCARI (100 aa)). A disulfide bridge links Cys-41 with Cys-116. The interval 45–54 (GFSLSTSGMC) is complementarity-determining-1. The framework-2 stretch occupies residues 55–71 (VSWIRQPPGKALEWLAL). A complementarity-determining-2 region spans residues 72 to 78 (IDWDDDK). Positions 79–116 (YYSTSLKTRLTISKDTSKNQVVLTMTNMDPVDTATYYC) are framework-3. The tract at residues 117 to 119 (ARI) is complementarity-determining-3.

Immunoglobulins are composed of two identical heavy chains and two identical light chains; disulfide-linked.

Its subcellular location is the secreted. The protein localises to the cell membrane. In terms of biological role, v region of the variable domain of immunoglobulin heavy chains that participates in the antigen recognition. Immunoglobulins, also known as antibodies, are membrane-bound or secreted glycoproteins produced by B lymphocytes. In the recognition phase of humoral immunity, the membrane-bound immunoglobulins serve as receptors which, upon binding of a specific antigen, trigger the clonal expansion and differentiation of B lymphocytes into immunoglobulins-secreting plasma cells. Secreted immunoglobulins mediate the effector phase of humoral immunity, which results in the elimination of bound antigens. The antigen binding site is formed by the variable domain of one heavy chain, together with that of its associated light chain. Thus, each immunoglobulin has two antigen binding sites with remarkable affinity for a particular antigen. The variable domains are assembled by a process called V-(D)-J rearrangement and can then be subjected to somatic hypermutations which, after exposure to antigen and selection, allow affinity maturation for a particular antigen. This chain is Immunoglobulin heavy variable 2-70, found in Homo sapiens (Human).